Consider the following 254-residue polypeptide: Geranylgeranylglyceryl phosphate synthase (254 aa).

The Mg(2+) site is built by Asp-28 and Ser-53. Residues 172-178 (YLEAGSG), 203-204 (GG), and 225-226 (GT) each bind sn-glycerol 1-phosphate.

The protein belongs to the GGGP/HepGP synthase family. Group II subfamily. Requires Mg(2+) as cofactor.

Its subcellular location is the cytoplasm. It catalyses the reaction sn-glycerol 1-phosphate + (2E,6E,10E)-geranylgeranyl diphosphate = sn-3-O-(geranylgeranyl)glycerol 1-phosphate + diphosphate. The protein operates within membrane lipid metabolism; glycerophospholipid metabolism. In terms of biological role, prenyltransferase that catalyzes the transfer of the geranylgeranyl moiety of geranylgeranyl diphosphate (GGPP) to the C3 hydroxyl of sn-glycerol-1-phosphate (G1P). This reaction is the first ether-bond-formation step in the biosynthesis of archaeal membrane lipids. In Methanococcus vannielii (strain ATCC 35089 / DSM 1224 / JCM 13029 / OCM 148 / SB), this protein is Geranylgeranylglyceryl phosphate synthase.